The following is a 588-amino-acid chain: Retrograde regulation protein 2 (588 aa).

The protein belongs to the GppA/Ppx family.

Required for a novel path of interorganelle communication between mitochondria, peroxisomes and the nucleus, thereby maintaining a functional metabolic interaction between the tricarboxylic acid and glyoxylate cycles. In particular, required for the retrograde expression of the peroxisomal isoform of citrate synthase, CIT2. This chain is Retrograde regulation protein 2 (RTG2), found in Saccharomyces cerevisiae (strain ATCC 204508 / S288c) (Baker's yeast).